The chain runs to 323 residues: Oligodendrocyte transcription factor 2 (323 aa).

2 stretches are compositionally biased toward polar residues: residues 1–13 and 27–45; these read MDSD…SRPS and KGSS…STPS. The interval 1 to 107 is disordered; that stretch reads MDSDASLVSS…KKQMTEPELQ (107 aa). The segment covering 76 to 93 has biased composition (low complexity); the sequence is KSSSSSTSSSTSSAAASS. Positions 108-162 constitute a bHLH domain; that stretch reads QLRLKINSRERKRMHDLNIAMDGLREVMPYAHGPSVRKLSKIATLLLARNYILML.

As to quaternary structure, interacts with NKX2-2. Interacts with ZNF488. In terms of tissue distribution, expressed in the brain, in oligodendrocytes. Strongly expressed in oligodendrogliomas, while expression is weak to moderate in astrocytomas. Expression in glioblastomas highly variable.

It is found in the nucleus. It localises to the cytoplasm. Functionally, required for oligodendrocyte and motor neuron specification in the spinal cord, as well as for the development of somatic motor neurons in the hindbrain. Functions together with ZNF488 to promote oligodendrocyte differentiation. Cooperates with OLIG1 to establish the pMN domain of the embryonic neural tube. Antagonist of V2 interneuron and of NKX2-2-induced V3 interneuron development. The sequence is that of Oligodendrocyte transcription factor 2 (OLIG2) from Homo sapiens (Human).